The sequence spans 332 residues: Trace amine-associated receptor 1 (332 aa).

Over 1–23 (MHLCHAITNISHRNSDWSREVQA) the chain is Extracellular. Asn9 carries an N-linked (GlcNAc...) asparagine glycan. A helical transmembrane segment spans residues 24-48 (SLYSLMSLIILATLVGNLIVIISIS). The Cytoplasmic segment spans residues 49 to 58 (HFKQLHTPTN). A helical membrane pass occupies residues 59 to 80 (WLLHSMAIVDFLLGCLIMPCSM). At 81–95 (VRTVERCWYFGEILC) the chain is on the extracellular side. Cys95 and Cys181 are joined by a disulfide. A helical transmembrane segment spans residues 96–118 (KVHTSTDIMLSSASIFHLAFISI). Asp102 serves as a coordination point for 2-phenylethylamine. Residues 119–138 (DRYCAVCDPLRYKAKINIST) are Cytoplasmic-facing. The helical transmembrane segment at 139 to 160 (ILVMILVSWSLPAVYAFGMIFL) threads the bilayer. Topologically, residues 161-187 (ELNLKGVEELYRSQVSDLGGCSPFFSK) are extracellular. The tract at residues 174–185 (QVSDLGGCSPFF) is extracellular Loop 2 (ECL2). The chain crosses the membrane as a helical span at residues 188–210 (VSGVLAFMTSFYIPGSVMLFVYY). Residues 211–246 (RIYFIAKGQARSINRTNVQVGLEGKSQAPQSKETKA) are Cytoplasmic-facing. A helical membrane pass occupies residues 247-270 (AKTLGIMVGVFLVCWCPFFLCTVL). Residues 271-283 (DPFLGYVIPPSLN) are Extracellular-facing. A helical transmembrane segment spans residues 284 to 304 (DALYWFGYLNSALNPMVYAFF). Over 305-332 (YPWFRRALKMVLLGKIFQKDSSRSKLFL) the chain is Cytoplasmic.

This sequence belongs to the G-protein coupled receptor 1 family. Widely distributed throughout the brain. Strongly expressed in the mitral cell layer of the olfactory bulb, piriform cortex, the arcuate, motor, and mesencephalic trigeminal nuclei, lateral reticular and hypoglossal nuclei, cerebellar Purkinje cells, and ventral horn of the spinal cord. Moderately expressed in the frontal, entorhinal, and agranular cortices, the ventral pallidum, thalamus, hippocampus, several hypothalamic nuclei, ambiguus, dorsal raphe, and gigantocellular reticular nuclei. Weakly expressed in the septum, basal ganglia, amygdala, myelencephalon, and spinal cord dorsal horn. Particularly interesting is the moderate expression in several monoaminergic cell groups, namely the dorsal raphe, the locus coeruleus, and the ventral tegmental area.

The protein localises to the endomembrane system. The protein resides in the endoplasmic reticulum membrane. It is found in the cell membrane. Activated by SEP-363856 small molecule: IHCH-7179 acts both as an agonist activator for HTR1A and TAAR1. Functionally, intracellular G-protein coupled receptor for trace amines, which recognizes endogenous amine-containing metabolites such as beta-phenylethylamine (beta-PEA), 3-iodothyronamine (T1AM), isoamylamine (IAA), cadaverine (CAD), cyclohexylamine (CHA), p-tyramine (p-TYR), trimethylamine (TMA), octopamine and tryptamine. Also functions as a receptor for various drugs and psychoactive substances, such as amphetamine and methamphetamine. Unresponsive to classical biogenic amines, such as epinephrine and histamine and only partially activated by dopamine and serotonin. Expressed in both the central and peripheral nervous system: TAAR1 activation regulates the activity of several neurotransmitter signaling pathways by (1) decreasing the basal firing rates of the neurons involved and by (2) lowering the sensitivity of receptors to neurotransmitters. Ligand binding causes a conformation change that triggers signaling via guanine nucleotide-binding proteins (G proteins) and modulates the activity of downstream effectors. TAAR1 is coupled with different G(i)/G(o)-, G(s)- or G(q)/G(11) classes of G alpha proteins depending on the ligand. CAD-binding is coupled to G(i)/G(o) G alpha proteins and mediates inhibition of adenylate cyclase activity. T1AM- or beta-PEA-binding is coupled to G(s) G alpha proteins and mediates activation of adenylate cyclase activity. CHA- or IAA-binding is coupled to G(q)/G(11) G alpha proteins and activates phospholipase C-beta, releasing diacylglycerol (DAG) and inositol 1,4,5-trisphosphate (IP3) second messengers. TMA-binding is coupled with all three G(i)/G(o)-, G(s)- or G(q)/G(11) G alpha protein subtypes. The chain is Trace amine-associated receptor 1 from Mus musculus (Mouse).